The primary structure comprises 316 residues: uncharacterized protein (316 aa).

Transmembrane regions (helical) follow at residues isoleucine 74–isoleucine 94, tryptophan 99–glycine 119, methionine 166–glycine 186, and valine 188–phenylalanine 208.

The protein localises to the cell membrane. This is an uncharacterized protein from Synechocystis sp. (strain ATCC 27184 / PCC 6803 / Kazusa).